A 357-amino-acid chain; its full sequence is Homoarginine-6-hydroxylase 2-ODD-C23.2 (357 aa).

Residues 208–308 (PFWVMRIIGY…RVCVAFFYET (101 aa)) form the Fe2OG dioxygenase domain. H231, D233, and H289 together coordinate Fe cation. R299 contributes to the 2-oxoglutarate binding site.

It belongs to the iron/ascorbate-dependent oxidoreductase family. Fe(2+) serves as cofactor. In terms of tissue distribution, expressed in senescent leaves.

The protein localises to the cytoplasm. It is found in the cytosol. The enzyme catalyses L-homoarginine + 2-oxoglutarate + O2 = 6-hydroxy-L-homoarginine + succinate + CO2. It carries out the reaction L-arginine + 2-oxoglutarate + O2 = 5-hydroxy-L-arginine + succinate + CO2. With respect to regulation, slightly inhibited by canavanine (Can), the 5-oxa-analog of arginine. Functionally, 2-oxoglutarate-dependent dioxygenase catalyzing homoarginine 6-hydroxylation and arginine-5-hydroxylation thus producing 6-hydroxy-L-homoarginine and 5-hydroxy-L-arginine, respectively. Guanidine (Gd) is in turn synthesized by the spontaneous conversion of 6-hydroxy-L-homoarginine and 5-hydroxy-L-arginine to (S)-2-amino-6-oxohexanoate (RHEA:79843) and L-glutamate 5-semialdehyde (RHEA:31527); guanidine is a nitrogen-rich compound that may serve as a defense or signaling substance. The sequence is that of Homoarginine-6-hydroxylase 2-ODD-C23.2 from Arabidopsis thaliana (Mouse-ear cress).